The following is a 954-amino-acid chain: Endogenous retrovirus group K member 25 Pol protein (954 aa).

Residues 57–245 (LEKGHIEPSF…TPFHYLGMQI (189 aa)) enclose the Reverse transcriptase domain. The LPQG signature appears at 161–164 (LPQG). The YXDD motif lies at 195-198 (YIDD). In terms of domain architecture, RNase H type-1 spans 460–588 (LENALTVFTD…ADLLVSSALI (129 aa)). Residues aspartate 469, glutamate 497, aspartate 515, and aspartate 580 each contribute to the Mg(2+) site. The Integrase-type zinc-finger motif lies at 585–626 (SALIKAQELHALTHVNAAGLKNKFDVTWKLAKDIVQHCTQCQ). Zn(2+) is bound by residues histidine 594, histidine 598, cysteine 622, and cysteine 625. The Integrase catalytic domain maps to 640–801 (RGLCPNALWQ…TSAEQHLTGK (162 aa)). A DNA-binding region (integrase-type) is located at residues 809 to 857 (KLIWWKDNKNKTWEIGKVITWGRGFACVSPGENQLPVWIPTRHLKFYNE). Residues 862–888 (AKKSTSAETETPQSSTVDSQDEQNGDV) form a disordered region. Residues 867–879 (SAETETPQSSTVD) show a composition bias toward polar residues.

This sequence belongs to the beta type-B retroviral polymerase family. HERV class-II K(HML-2) pol subfamily.

It carries out the reaction DNA(n) + a 2'-deoxyribonucleoside 5'-triphosphate = DNA(n+1) + diphosphate. The catalysed reaction is Endonucleolytic cleavage to 5'-phosphomonoester.. Its function is as follows. Early post-infection, the reverse transcriptase converts the viral RNA genome into double-stranded viral DNA. The RNase H domain of the reverse transcriptase performs two functions. It degrades the RNA template and specifically removes the RNA primer from the RNA/DNA hybrid. Following nuclear import, the integrase catalyzes the insertion of the linear, double-stranded viral DNA into the host cell chromosome. Endogenous Pol proteins may have kept, lost or modified their original function during evolution. The sequence is that of Endogenous retrovirus group K member 25 Pol protein (ERVK-25) from Homo sapiens (Human).